The following is a 921-amino-acid chain: 2-oxoadipate dehydrogenase complex component E1 (921 aa).

N6-succinyllysine occurs at positions 184 and 189. The disordered stretch occupies residues 300 to 319; sequence GKTRGRQQSREDGDYSPNGS. Lys-801 and Lys-819 each carry N6-succinyllysine.

Belongs to the alpha-ketoglutarate dehydrogenase family. The 2-oxoadipate dehydrogenase complex is composed of OADH (2-oxoadipate dehydrogenase; E1a), DLST (dihydrolipoamide succinyltransferase; E2) and DLD (dihydrolipoamide dehydrogenase; E3). E1a functional unit is a dimer. Requires thiamine diphosphate as cofactor.

It localises to the mitochondrion. The enzyme catalyses N(6)-[(R)-lipoyl]-L-lysyl-[protein] + 2-oxoadipate + H(+) = N(6)-[(R)-S(8)-glutaryldihydrolipoyl]-L-lysyl-[protein] + CO2. The protein operates within amino-acid degradation. In terms of biological role, 2-oxoadipate dehydrogenase (E1a) component of the 2-oxoadipate dehydrogenase complex (OADHC). Participates in the first step, rate limiting for the overall conversion of 2-oxoadipate (alpha-ketoadipate) to glutaryl-CoA and CO(2) catalyzed by the whole OADHC. Catalyzes the irreversible decarboxylation of 2-oxoadipate via the thiamine diphosphate (ThDP) cofactor and subsequent transfer of the decarboxylated acyl intermediate on an oxidized dihydrolipoyl group that is covalently amidated to the E2 enzyme (dihydrolipoyllysine-residue succinyltransferase or DLST). Can catalyze the decarboxylation of 2-oxoglutarate in vitro, but at a much lower rate than 2-oxoadipate. Responsible for the last step of L-lysine, L-hydroxylysine and L-tryptophan catabolism with the common product being 2-oxoadipate. This chain is 2-oxoadipate dehydrogenase complex component E1 (Dhtkd1), found in Mus musculus (Mouse).